Reading from the N-terminus, the 404-residue chain is Tryptophan synthase beta chain (404 aa).

Position 90 is an N6-(pyridoxal phosphate)lysine (Lys-90).

This sequence belongs to the TrpB family. Tetramer of two alpha and two beta chains. The cofactor is pyridoxal 5'-phosphate.

The enzyme catalyses (1S,2R)-1-C-(indol-3-yl)glycerol 3-phosphate + L-serine = D-glyceraldehyde 3-phosphate + L-tryptophan + H2O. Its pathway is amino-acid biosynthesis; L-tryptophan biosynthesis; L-tryptophan from chorismate: step 5/5. In terms of biological role, the beta subunit is responsible for the synthesis of L-tryptophan from indole and L-serine. This chain is Tryptophan synthase beta chain, found in Geobacillus thermodenitrificans (strain NG80-2).